A 392-amino-acid polypeptide reads, in one-letter code: Cytochrome P450 monooxygenase ppzE (392 aa).

Residues 10 to 30 (LELVWFVALYPFACWTLFAVL) traverse the membrane as a helical segment. N319 carries an N-linked (GlcNAc...) asparagine glycan. A heme-binding site is contributed by C353. N372 carries an N-linked (GlcNAc...) asparagine glycan.

The protein belongs to the cytochrome P450 family. Heme serves as cofactor.

The protein resides in the membrane. The protein operates within secondary metabolite biosynthesis. Cytochrome P450 monooxygenase; part of the gene cluster that mediates the biosynthesis of pyrrolopyrazines, secondary metabolites showing insecticidal activity. The role of ppzE within the pathway has still to be determined. The single multifunctional NRPS ppzA is sufficient to produce peramine via condensation of 1-pyrroline-5-carboxylate and arginine, N-methylation of the alpha-amino group of arginine and reduction of the thioester and the cyclization to form an iminium ion resulting in release from the peptide synthetase. Deprotonation of this intermediate and oxidation of the pyrroline ring would give rise to peramine. In Epichloe species that produce only peramine, the peramine synthetase gene is not localized in a gene cluster, in contrast to Metarhizium species that contain additional pyrrolopyrazine biosynthesis genes. The 2-oxoglutarate-Fe(II) type oxidoreductase ppzC hydroxylates peramine to yield the newly identified compound 8-hydroxyperamine whereas ppzD converts L-proline into trans-4-hydroxy-L-proline, a precursor of peramine biosynthesis. The protein is Cytochrome P450 monooxygenase ppzE of Metarhizium rileyi (strain RCEF 4871) (Nomuraea rileyi).